The following is a 1155-amino-acid chain: Probable translation initiation factor IF-2 (1155 aa).

Positions 237-367 (FAGVMFGDGC…LSILLLRFEI (131 aa)) constitute a DOD-type homing endonuclease domain. In terms of domain architecture, tr-type G spans 561–781 (TTETHNFIAN…VAGLAQKFLE (221 aa)). GTP contacts are provided by residues 634–638 (DTPGH) and 688–691 (NKID).

The protein belongs to the TRAFAC class translation factor GTPase superfamily. Classic translation factor GTPase family. IF-2 subfamily. In terms of processing, this protein undergoes a protein self splicing that involves a post-translational excision of the intervening region (intein) followed by peptide ligation.

In terms of biological role, function in general translation initiation by promoting the binding of the formylmethionine-tRNA to ribosomes. Seems to function along with eIF-2. The chain is Probable translation initiation factor IF-2 (infB) from Methanocaldococcus jannaschii (strain ATCC 43067 / DSM 2661 / JAL-1 / JCM 10045 / NBRC 100440) (Methanococcus jannaschii).